A 252-amino-acid chain; its full sequence is Small ribosomal subunit protein uS2B (252 aa).

Position 2 is an N-acetylserine (Ser2). Composition is skewed to acidic residues over residues 213-229 (VAEE…EEVK) and 241-252 (EWAEENADNVEW). The interval 213-252 (VAEEAAAAEEGEEEEVKEEVTEGQAEATEWAEENADNVEW) is disordered.

Belongs to the universal ribosomal protein uS2 family. As to quaternary structure, component of the small ribosomal subunit. Mature ribosomes consist of a small (40S) and a large (60S) subunit. The 40S subunit contains about 33 different proteins and 1 molecule of RNA (18S). The 60S subunit contains about 49 different proteins and 3 molecules of RNA (25S, 5.8S and 5S). Interacts with RPS21.

It is found in the cytoplasm. Functionally, required for the assembly and/or stability of the 40S ribosomal subunit. Required for the processing of the 20S rRNA-precursor to mature 18S rRNA in a late step of the maturation of 40S ribosomal subunits. The chain is Small ribosomal subunit protein uS2B from Saccharomyces cerevisiae (strain RM11-1a) (Baker's yeast).